Here is a 125-residue protein sequence, read N- to C-terminus: Small ribosomal subunit protein uS13 (125 aa).

Residues 95 to 125 (GLPVNGQRTRTNARTRKGVKKTVANKKKATK) form a disordered region. The segment covering 105–125 (TNARTRKGVKKTVANKKKATK) has biased composition (basic residues).

It belongs to the universal ribosomal protein uS13 family. As to quaternary structure, part of the 30S ribosomal subunit. Forms a loose heterodimer with protein S19. Forms two bridges to the 50S subunit in the 70S ribosome.

In terms of biological role, located at the top of the head of the 30S subunit, it contacts several helices of the 16S rRNA. In the 70S ribosome it contacts the 23S rRNA (bridge B1a) and protein L5 of the 50S subunit (bridge B1b), connecting the 2 subunits; these bridges are implicated in subunit movement. Contacts the tRNAs in the A and P-sites. The polypeptide is Small ribosomal subunit protein uS13 (Leptospira biflexa serovar Patoc (strain Patoc 1 / Ames)).